We begin with the raw amino-acid sequence, 201 residues long: Molybdenum cofactor guanylyltransferase (201 aa).

GTP-binding positions include 15-17 (LCG), lysine 28, aspartate 74, and aspartate 104. Residue aspartate 104 participates in Mg(2+) binding.

It belongs to the MobA family. Monomer. Requires Mg(2+) as cofactor.

The protein localises to the cytoplasm. It catalyses the reaction Mo-molybdopterin + GTP + H(+) = Mo-molybdopterin guanine dinucleotide + diphosphate. Its function is as follows. Transfers a GMP moiety from GTP to Mo-molybdopterin (Mo-MPT) cofactor (Moco or molybdenum cofactor) to form Mo-molybdopterin guanine dinucleotide (Mo-MGD) cofactor. This is Molybdenum cofactor guanylyltransferase from Ectopseudomonas mendocina (strain ymp) (Pseudomonas mendocina).